Consider the following 555-residue polypeptide: Bicyclo-germacrene synthase (555 aa).

The Mg(2+) site is built by Asp-311 and Glu-315. The short motif at 311–315 (DDTYE) is the DDXXD motif element. Homodimerization regions lie at residues 316–322 (YATLDEL) and 392–429 (EAKW…VGVG). 2 residues coordinate Mg(2+): Asp-459 and Glu-467.

This sequence belongs to the terpene synthase family. In terms of assembly, homodimer. Mn(2+) serves as cofactor. Requires Mg(2+) as cofactor. Expressed in peltate glandular trichomes. Present at low levels in flowers, leaves and stems.

The enzyme catalyses (2E,6E)-farnesyl diphosphate = bicyclogermacrene + diphosphate. The catalysed reaction is (2E)-geranyl diphosphate = terpinolene + diphosphate. It catalyses the reaction (2E)-geranyl diphosphate = (4R)-limonene + diphosphate. It carries out the reaction (2E)-geranyl diphosphate + H2O = (2E)-geraniol + diphosphate. The enzyme catalyses (2E,6E)-farnesyl diphosphate = allo-aromadendrene + diphosphate. It functions in the pathway secondary metabolite biosynthesis; terpenoid biosynthesis. Involved in the biosynthesis of phenolic sesquiterpenes natural products. Sesquiterpene synthase converting (2E,6E)-farnesyl diphosphate (FPP) to alloaromadendrene and bicyclo-germacrene. The product formation is dependent on the metal ions present and in presence of manganese, bicyclo-germacrene is greatly favored while both alloaromadendrene and bicyclo-germacrene are produced in equivalent amounts in the presence of magnesium. Can also convert geranyl diphosphate (GPP) to terpinolene, limonene and geraniol, and this conversion is not affected by the presence of magnesium or manganese. The sequence is that of Bicyclo-germacrene synthase (TPS4) from Origanum vulgare (Wild marjoram).